Consider the following 310-residue polypeptide: 4-diphosphocytidyl-2-C-methyl-D-erythritol kinase (310 aa).

Lysine 12 is an active-site residue. Residue 97–107 (PIGAGLAGGSS) participates in ATP binding. The active site involves aspartate 139.

This sequence belongs to the GHMP kinase family. IspE subfamily.

The enzyme catalyses 4-CDP-2-C-methyl-D-erythritol + ATP = 4-CDP-2-C-methyl-D-erythritol 2-phosphate + ADP + H(+). It functions in the pathway isoprenoid biosynthesis; isopentenyl diphosphate biosynthesis via DXP pathway; isopentenyl diphosphate from 1-deoxy-D-xylulose 5-phosphate: step 3/6. Catalyzes the phosphorylation of the position 2 hydroxy group of 4-diphosphocytidyl-2C-methyl-D-erythritol. The protein is 4-diphosphocytidyl-2-C-methyl-D-erythritol kinase of Synechococcus sp. (strain CC9311).